The following is a 344-amino-acid chain: tRNA dimethylallyltransferase (344 aa).

ATP is bound at residue 19-26; the sequence is GPTASGKT. 21–26 contributes to the substrate binding site; the sequence is TASGKT.

It belongs to the IPP transferase family. Monomer. Mg(2+) serves as cofactor.

The enzyme catalyses adenosine(37) in tRNA + dimethylallyl diphosphate = N(6)-dimethylallyladenosine(37) in tRNA + diphosphate. Catalyzes the transfer of a dimethylallyl group onto the adenine at position 37 in tRNAs that read codons beginning with uridine, leading to the formation of N6-(dimethylallyl)adenosine (i(6)A). This is tRNA dimethylallyltransferase from Bifidobacterium animalis subsp. lactis (strain AD011).